We begin with the raw amino-acid sequence, 208 residues long: Small ribosomal subunit protein uS4 (208 aa).

Residues 98–161 enclose the S4 RNA-binding domain; it reads QRLDNVVYRM…KTNSQILRAI (64 aa).

Belongs to the universal ribosomal protein uS4 family. Part of the 30S ribosomal subunit. Contacts protein S5. The interaction surface between S4 and S5 is involved in control of translational fidelity.

In terms of biological role, one of the primary rRNA binding proteins, it binds directly to 16S rRNA where it nucleates assembly of the body of the 30S subunit. Functionally, with S5 and S12 plays an important role in translational accuracy. In Sulfurovum sp. (strain NBC37-1), this protein is Small ribosomal subunit protein uS4.